The sequence spans 233 residues: Small ribosomal subunit protein uS2 (233 aa).

This sequence belongs to the universal ribosomal protein uS2 family.

The chain is Small ribosomal subunit protein uS2 from Clostridium botulinum (strain Alaska E43 / Type E3).